Consider the following 575-residue polypeptide: Septation ring formation regulator EzrA (575 aa).

The Extracellular portion of the chain corresponds to 1 to 8; the sequence is MSNGQLIY. Residues 9–27 form a helical membrane-spanning segment; that stretch reads LMVAIAVILVLAYVVAIFL. Residues 28–575 lie on the Cytoplasmic side of the membrane; sequence RKRNEGRLEA…YEKTRETIRF (548 aa). Coiled coils occupy residues 105-191, 265-301, 354-416, and 456-526; these read LKAS…FVTL, LYEA…LYDI, VRRI…IEKD, and TASN…IQEA.

The protein belongs to the EzrA family.

The protein localises to the cell membrane. Its function is as follows. Negative regulator of FtsZ ring formation; modulates the frequency and position of FtsZ ring formation. Inhibits FtsZ ring formation at polar sites. Interacts either with FtsZ or with one of its binding partners to promote depolymerization. The chain is Septation ring formation regulator EzrA from Streptococcus pneumoniae (strain ATCC BAA-255 / R6).